The sequence spans 215 residues: 3-isopropylmalate dehydratase small subunit (215 aa).

It belongs to the LeuD family. LeuD type 1 subfamily. As to quaternary structure, heterodimer of LeuC and LeuD.

It carries out the reaction (2R,3S)-3-isopropylmalate = (2S)-2-isopropylmalate. It functions in the pathway amino-acid biosynthesis; L-leucine biosynthesis; L-leucine from 3-methyl-2-oxobutanoate: step 2/4. In terms of biological role, catalyzes the isomerization between 2-isopropylmalate and 3-isopropylmalate, via the formation of 2-isopropylmaleate. This Polynucleobacter asymbioticus (strain DSM 18221 / CIP 109841 / QLW-P1DMWA-1) (Polynucleobacter necessarius subsp. asymbioticus) protein is 3-isopropylmalate dehydratase small subunit.